The following is a 2258-amino-acid chain: Genome polyprotein 1 (2258 aa).

One can recognise a Helicase ATP-binding domain in the interval Ser439–Val597. Arg487–Thr494 is an ATP binding site. The 167-residue stretch at Asp612–Phe778 folds into the Helicase C-terminal domain. Residue Tyr1141 is modified to O-(5'-phospho-RNA)-tyrosine. Residues Ala1257–Pro1476 form the Peptidase C4 domain. Residues His1302, Asp1338, and Cys1405 each act as for nuclear inclusion protein A activity in the active site. The 125-residue stretch at Trp1745–Phe1869 folds into the RdRp catalytic domain. Disordered stretches follow at residues Asn2027 to Ser2047 and Thr2233 to Arg2258. The segment covering Thr2242–Arg2258 has biased composition (basic and acidic residues).

Belongs to the bymoviruses polyprotein 1 family. In terms of processing, VPg is uridylylated by the polymerase and is covalently attached to the 5'-end of the genomic RNA. This uridylylated form acts as a nucleotide-peptide primer for the polymerase. Post-translationally, the viral RNA1 of bymoviruses is expressed as a single polyprotein which undergoes post-translational proteolytic processing by the main proteinase NIa-pro resulting in the production of at least eight individual proteins.

The protein resides in the host cytoplasmic vesicle. It localises to the virion. The catalysed reaction is RNA(n) + a ribonucleoside 5'-triphosphate = RNA(n+1) + diphosphate. It carries out the reaction Hydrolyzes glutaminyl bonds, and activity is further restricted by preferences for the amino acids in P6 - P1' that vary with the species of potyvirus, e.g. Glu-Xaa-Xaa-Tyr-Xaa-Gln-|-(Ser or Gly) for the enzyme from tobacco etch virus. The natural substrate is the viral polyprotein, but other proteins and oligopeptides containing the appropriate consensus sequence are also cleaved.. Indispensable for virus replication. Its function is as follows. Mediates the cap-independent, EIF4E-dependent translation of viral genomic RNAs. Binds to the cap-binding site of host EIF4E and thus interferes with the host EIF4E-dependent mRNA export and translation. VPg-RNA directly binds EIF4E and is a template for transcription. Also forms trimeric complexes with EIF4E-EIF4G, which are templates for translation. Functionally, has RNA-binding and proteolytic activities. In terms of biological role, an RNA-dependent RNA polymerase that plays an essential role in the virus replication. The chain is Genome polyprotein 1 from Barley mild mosaic virus (strain Na1) (BaMMV).